Reading from the N-terminus, the 380-residue chain is Maintenance of mitochondrial morphology protein 1 (380 aa).

Residues 1 to 64 lie on the Lumenal side of the membrane; it reads MQGRAIWAEG…IVPSLSFIQG (64 aa). A helical membrane pass occupies residues 65–85; sequence FMAGQAVLLMLFLGLFRYFFM. At 86 to 380 the chain is on the cytoplasmic side; sequence TSSPGTRAQQ…IGTSPADPLA (295 aa). The region spanning 147 to 369 is the SMP-LTD domain; the sequence is APESLDWLNV…WPHFWHIPLP (223 aa).

Belongs to the MMM1 family. As to quaternary structure, homodimer. Component of the ER-mitochondria encounter structure (ERMES) or MDM complex, composed of MMM1, MDM10, MDM12 and MDM34. An MMM1 homodimer associates with one molecule of MDM12 on each side in a pairwise head-to-tail manner, and the SMP-LTD domains of MMM1 and MDM12 generate a continuous hydrophobic tunnel for phospholipid trafficking.

Its subcellular location is the endoplasmic reticulum membrane. In terms of biological role, component of the ERMES/MDM complex, which serves as a molecular tether to connect the endoplasmic reticulum (ER) and mitochondria. Components of this complex are involved in the control of mitochondrial shape and protein biogenesis, and function in nonvesicular lipid trafficking between the ER and mitochondria. The MDM12-MMM1 subcomplex functions in the major beta-barrel assembly pathway that is responsible for biogenesis of all outer membrane beta-barrel proteins, and acts in a late step after the SAM complex. The MDM10-MDM12-MMM1 subcomplex further acts in the TOM40-specific pathway after the action of the MDM12-MMM1 complex. Essential for establishing and maintaining the structure of mitochondria and maintenance of mtDNA nucleoids. This Malassezia globosa (strain ATCC MYA-4612 / CBS 7966) (Dandruff-associated fungus) protein is Maintenance of mitochondrial morphology protein 1.